We begin with the raw amino-acid sequence, 153 residues long: Natriuretic peptides A (153 aa).

An N-terminal signal peptide occupies residues 1–25 (MGPFSTITVSFLFCLAFWHPDQIGA). 2 propeptides span residues 26–123 (NPVY…TAPR) and 93–103 (DGEALGRSTWE). The tract at residues 54–101 (EDEAVPPQALSEQSDEAGAALSPLPEVPPWTGEVSPAQRDGEALGRST) is disordered. Serine 129 carries the post-translational modification Phosphoserine. The cysteines at positions 130 and 146 are disulfide-linked. Residues 147–151 (NSFRY) form an important for degradation of atrial natriuretic peptide by IDE region.

Belongs to the natriuretic peptide family. Homodimer; disulfide-linked antiparallel dimer. Post-translationally, the precursor molecule is proteolytically cleaved by CORIN at Arg-123 to produce the atrial natriuretic peptide. Undergoes further proteolytic cleavage by unknown proteases to give rise to long-acting natriuretic peptide, vessel dilator and kaliuretic peptide. Additional processing gives rise to the auriculin and atriopeptin peptides. In the kidneys, alternative processing by an unknown protease results in the peptide urodilatin. In terms of processing, cleavage by MME initiates degradation of the factor and thereby regulates its activity. Degradation by IDE results in reduced activation of NPR1 (in vitro). During IDE degradation, the resulting products can temporarily stimulate NPR2 to produce cGMP, before the fragments are completely degraded and inactivated by IDE (in vitro). Degraded by IDE. Post-translationally, phosphorylation on Ser-129 decreases vasorelaxant activity.

It is found in the secreted. The protein resides in the perikaryon. The protein localises to the cell projection. Its function is as follows. Hormone that plays a key role in mediating cardio-renal homeostasis, and is involved in vascular remodeling and regulating energy metabolism. Acts by specifically binding and stimulating NPR1 to produce cGMP, which in turn activates effector proteins, such as PRKG1, that drive various biological responses. Regulates vasodilation, natriuresis, diuresis and aldosterone synthesis and is therefore essential for regulating blood pressure, controlling the extracellular fluid volume and maintaining the fluid-electrolyte balance. Also involved in inhibiting cardiac remodeling and cardiac hypertrophy by inducing cardiomyocyte apoptosis and attenuating the growth of cardiomyocytes and fibroblasts. Plays a role in female pregnancy by promoting trophoblast invasion and spiral artery remodeling in uterus, and thus prevents pregnancy-induced hypertension. In adipose tissue, acts in various cGMP- and PKG-dependent pathways to regulate lipid metabolism and energy homeostasis. This includes up-regulating lipid metabolism and mitochondrial oxygen utilization by activating the AMP-activated protein kinase (AMPK), and increasing energy expenditure by acting via MAPK11 to promote the UCP1-dependent thermogenesis of brown adipose tissue. Binds the clearance receptor NPR3 which removes the hormone from circulation. May have a role in cardio-renal homeostasis through regulation of natriuresis, diuresis, vasodilation, and inhibiting aldosterone synthesis. In vitro, promotes the production of cGMP and induces vasodilation. May promote natriuresis, at least in part, by enhancing prostaglandin E2 synthesis resulting in the inhibition of renal Na+-K+-ATPase. However reports on the involvement of this peptide in mammal blood volume and blood pressure homeostasis are conflicting; according to a report, in vivo it is not sufficient to activate cGMP and does not inhibit collecting duct transport nor effect diuresis and natriuresis. Appears to bind to specific receptors that are distinct from the receptors bound by atrial natriuretic peptide and vessel dilator. Possibly enhances protein excretion in urine by decreasing proximal tubular protein reabsorption. Functionally, may have a role in cardio-renal homeostasis through regulation of natriuresis, diuresis, and vasodilation. In vitro, promotes the production of cGMP and induces vasodilation. May promote natriuresis, at least in part, by enhancing prostaglandin E2 synthesis resulting in the inhibition of renal Na+-K+-ATPase. However reports on the involvement of this peptide in mammal blood volume and blood pressure homeostasis are conflicting; according to a report it is not sufficient to activate cGMP and does not inhibit collecting duct transport nor effect diuresis and natriuresis. Appears to bind to specific receptors that are distinct from the receptors bound by the atrial natriuretic and long-acting natriuretic peptides. Possibly functions in protein excretion in urine by maintaining the integrity of the proximal tubules and enhancing protein excretion by decreasing proximal tubular protein reabsorption. In terms of biological role, may have a role in cardio-renal homeostasis through regulation of diuresis and inhibiting aldosterone synthesis. In vitro, promotes the production of cGMP and induces vasodilation. May promote natriuresis, at least in part, by enhancing prostaglandin E2 synthesis resulting in the inhibition of renal Na+-K+-ATPase. May have a role in potassium excretion but not sodium excretion (natriuresis). Possibly enhances protein excretion in urine by decreasing proximal tubular protein reabsorption. Its function is as follows. Hormone produced in the kidneys that appears to be important for maintaining cardio-renal homeostasis. Mediates vasodilation, natriuresis and diuresis primarily in the renal system, in order to maintain the extracellular fluid volume and control the fluid-electrolyte balance. Specifically binds and stimulates cGMP production by renal transmembrane receptors, likely NPR1. Urodilatin not ANP, may be the natriuretic peptide responsible for the regulation of sodium and water homeostasis in the kidney. May have a role in cardio-renal homeostasis through regulation of natriuresis and vasodilation. In vivo promotes natriuresis and in vitro, vasodilates renal artery strips. Functionally, may have a role in cardio-renal homeostasis through regulation of regulation of natriuresis and vasodilation. In vivo promotes natriuresis. In vitro, vasodilates intestinal smooth muscle but not smooth muscle strips. In terms of biological role, may have a role in cardio-renal homeostasis through regulation of natriuresis and vasodilation. In vivo promotes natriuresis. In vitro, selectively vasodilates intestinal and vascular smooth muscle strips. Its function is as follows. May have a role in cardio-renal homeostasis through regulation of natriuresis and vasodilation. In vivo promotes natriuresis. In vitro, selectively vasodilates intestinal smooth muscle but not vascular smooth muscle strips. The chain is Natriuretic peptides A (NPPA) from Oryctolagus cuniculus (Rabbit).